We begin with the raw amino-acid sequence, 343 residues long: Phenylalanine--tRNA ligase alpha subunit (343 aa).

Glutamate 256 is a binding site for Mg(2+).

Belongs to the class-II aminoacyl-tRNA synthetase family. Phe-tRNA synthetase alpha subunit type 1 subfamily. As to quaternary structure, tetramer of two alpha and two beta subunits. It depends on Mg(2+) as a cofactor.

It is found in the cytoplasm. The enzyme catalyses tRNA(Phe) + L-phenylalanine + ATP = L-phenylalanyl-tRNA(Phe) + AMP + diphosphate + H(+). The sequence is that of Phenylalanine--tRNA ligase alpha subunit from Aster yellows witches'-broom phytoplasma (strain AYWB).